We begin with the raw amino-acid sequence, 169 residues long: Der GTPase-activating protein YihI (169 aa).

Disordered stretches follow at residues 1–99 and 146–169; these read MKPS…QAEL and SYDD…LRGN. Positions 10–19 are enriched in basic residues; that stretch reads SKGHAKARRK. Residues 20–30 are compositionally biased toward basic and acidic residues; sequence TREELDQEARD. Positions 31 to 40 are enriched in basic residues; the sequence is RKRQKKRRGH. The span at 49-58 shows a compositional bias: polar residues; that stretch reads GNTTSGSKGQ. A compositionally biased stretch (acidic residues) spans 147 to 159; it reads YDDDEEEEEDEKQ. Over residues 160–169 the composition is skewed to basic and acidic residues; sequence EDMMRLLRGN.

The protein belongs to the YihI family. In terms of assembly, interacts with Der.

Functionally, a GTPase-activating protein (GAP) that modifies Der/EngA GTPase function. May play a role in ribosome biogenesis. The sequence is that of Der GTPase-activating protein YihI from Escherichia coli O45:K1 (strain S88 / ExPEC).